The following is a 302-amino-acid chain: Glutaminase (302 aa).

Residues Ser61, Asn111, Glu155, Asn162, Tyr186, Tyr238, and Val256 each contribute to the substrate site.

This sequence belongs to the glutaminase family. In terms of assembly, homotetramer.

It carries out the reaction L-glutamine + H2O = L-glutamate + NH4(+). This chain is Glutaminase, found in Pseudomonas fluorescens (strain ATCC BAA-477 / NRRL B-23932 / Pf-5).